The chain runs to 509 residues: Membrane-bound lytic murein transglycosylase F (509 aa).

An N-terminal signal peptide occupies residues 1–40 (MLASACTHSWRTGRFLNRIIKSSVQTLTAAALIANLSACS). A non-LT domain region spans residues 41–280 (RPTTLEKIEQ…YLQERYFGHV (240 aa)). An LT domain region spans residues 281 to 509 (NQLNYVGART…APFRVTPPML (229 aa)). The active site involves Glu-327. A disordered region spans residues 474–500 (DGSVAQNEDAPTTGADGTTEETPAIPA).

It in the N-terminal section; belongs to the bacterial solute-binding protein 3 family. In the C-terminal section; belongs to the transglycosylase Slt family.

The protein localises to the cell outer membrane. The catalysed reaction is Exolytic cleavage of the (1-&gt;4)-beta-glycosidic linkage between N-acetylmuramic acid (MurNAc) and N-acetylglucosamine (GlcNAc) residues in peptidoglycan, from either the reducing or the non-reducing ends of the peptidoglycan chains, with concomitant formation of a 1,6-anhydrobond in the MurNAc residue.. Murein-degrading enzyme that degrades murein glycan strands and insoluble, high-molecular weight murein sacculi, with the concomitant formation of a 1,6-anhydromuramoyl product. Lytic transglycosylases (LTs) play an integral role in the metabolism of the peptidoglycan (PG) sacculus. Their lytic action creates space within the PG sacculus to allow for its expansion as well as for the insertion of various structures such as secretion systems and flagella. In Hahella chejuensis (strain KCTC 2396), this protein is Membrane-bound lytic murein transglycosylase F.